Consider the following 172-residue polypeptide: Protein LHCP TRANSLOCATION DEFECT (172 aa).

A chloroplast-targeting transit peptide spans 1–28 (MASIPCTFQLSARASSASAAAAARRSPR). The stretch at 114-146 (PVDILLMLAASEGDKPKLEELLRAGAKYDVKDV) is one ANK repeat.

The protein resides in the plastid. The protein localises to the chloroplast. Its function is as follows. Involved in the import of light-harvesting complex proteins (LHCP) and subsequent routing of these proteins to the chloroplast signal recognition particle (SRP) pathway. The chain is Protein LHCP TRANSLOCATION DEFECT (LTD) from Oryza sativa subsp. indica (Rice).